A 969-amino-acid chain; its full sequence is Rab3 GTPase-activating protein catalytic subunit (969 aa).

Residues 532–549 show a composition bias toward basic and acidic residues; the sequence is DDGKKSSSSDGARDRSRG. The tract at residues 532 to 613 is disordered; that stretch reads DDGKKSSSSD…PEGRLQPHGT (82 aa). The span at 550 to 572 shows a compositional bias: low complexity; sequence APEGAGPEGAGPAEAAGKSWDSW. Residues 573–589 are compositionally biased toward acidic residues; sequence SDSEDEFFECVSDTEEM. Positions 590-608 are enriched in basic and acidic residues; it reads KEDKEEAENRSRSKPEGRL.

This sequence belongs to the Rab3-GAP catalytic subunit family. In terms of assembly, the Rab3 GTPase-activating complex is a heterodimer composed of rab3gap1 and rab3gap2. The Rab3 GTPase-activating complex interacts with DMXL2. Interacts with LMAN1.

The protein resides in the cytoplasm. It localises to the endoplasmic reticulum. Its subcellular location is the golgi apparatus. The protein localises to the cis-Golgi network. Catalytic subunit of the Rab3 GTPase-activating (Rab3GAP) complex composed of rab3gap1 and rab3gap2, which has GTPase-activating protein (GAP) activity towards various Rab3 subfamily members (RAB3A, RAB3B, RAB3C and RAB3D), RAB5A and RAB43, and guanine nucleotide exchange factor (GEF) activity towards RAB18. As part of the Rab3GAP complex, acts as a GAP for Rab3 proteins by converting active RAB3-GTP to the inactive form RAB3-GDP. Rab3 proteins are involved in regulated exocytosis of neurotransmitters and hormones. The Rab3GAP complex, acts as a GEF for RAB18 by promoting the conversion of inactive RAB18-GDP to the active form RAB18-GTP. Recruits and stabilizes RAB18 at the cis-Golgi membrane where RAB18 is most likely activated. Also involved in RAB18 recruitment at the endoplasmic reticulum (ER) membrane where it maintains proper ER structure. Required for normal eye and brain development. May participate in neurodevelopmental processes such as proliferation, migration and differentiation before synapse formation, and non-synaptic vesicular release of neurotransmitters. This Danio rerio (Zebrafish) protein is Rab3 GTPase-activating protein catalytic subunit (rab3gap1).